The primary structure comprises 628 residues: Phosphomethylpyrimidine synthase (628 aa).

The tract at residues M1–Q22 is disordered. Polar residues predominate over residues T7–Q22. Substrate-binding positions include N232, M261, Y290, H326, S346–G348, D387–R390, and E426. Position 430 (H430) interacts with Zn(2+). Y453 serves as a coordination point for substrate. H494 is a binding site for Zn(2+). C574, C577, and C582 together coordinate [4Fe-4S] cluster.

It belongs to the ThiC family. As to quaternary structure, homodimer. The cofactor is [4Fe-4S] cluster.

The catalysed reaction is 5-amino-1-(5-phospho-beta-D-ribosyl)imidazole + S-adenosyl-L-methionine = 4-amino-2-methyl-5-(phosphooxymethyl)pyrimidine + CO + 5'-deoxyadenosine + formate + L-methionine + 3 H(+). Its pathway is cofactor biosynthesis; thiamine diphosphate biosynthesis. Functionally, catalyzes the synthesis of the hydroxymethylpyrimidine phosphate (HMP-P) moiety of thiamine from aminoimidazole ribotide (AIR) in a radical S-adenosyl-L-methionine (SAM)-dependent reaction. The sequence is that of Phosphomethylpyrimidine synthase from Pseudomonas putida (strain W619).